We begin with the raw amino-acid sequence, 22 residues long: Unknown endosperm protein L (22 aa).

The span at 1-11 (MRHSNKIRDEE) shows a compositional bias: basic and acidic residues. A disordered region spans residues 1–22 (MRHSNKIRDEEMVNNTRLNXXA). Polar residues predominate over residues 13 to 22 (VNNTRLNXXA).

In terms of processing, the N-terminus is blocked.

This is Unknown endosperm protein L from Hordeum vulgare (Barley).